Reading from the N-terminus, the 60-residue chain is Large ribosomal subunit protein uL30 (60 aa).

This sequence belongs to the universal ribosomal protein uL30 family. In terms of assembly, part of the 50S ribosomal subunit.

In Pseudoalteromonas translucida (strain TAC 125), this protein is Large ribosomal subunit protein uL30.